Consider the following 480-residue polypeptide: Protein nucleotidyltransferase YdiU (480 aa).

8 residues coordinate ATP: glycine 86, glycine 88, arginine 89, lysine 109, aspartate 121, glycine 122, arginine 172, and arginine 179. Aspartate 248 functions as the Proton acceptor in the catalytic mechanism. Positions 249 and 258 each coordinate Mg(2+). Aspartate 258 provides a ligand contact to ATP.

Belongs to the SELO family. Mg(2+) serves as cofactor. Requires Mn(2+) as cofactor.

The enzyme catalyses L-seryl-[protein] + ATP = 3-O-(5'-adenylyl)-L-seryl-[protein] + diphosphate. It carries out the reaction L-threonyl-[protein] + ATP = 3-O-(5'-adenylyl)-L-threonyl-[protein] + diphosphate. It catalyses the reaction L-tyrosyl-[protein] + ATP = O-(5'-adenylyl)-L-tyrosyl-[protein] + diphosphate. The catalysed reaction is L-histidyl-[protein] + UTP = N(tele)-(5'-uridylyl)-L-histidyl-[protein] + diphosphate. The enzyme catalyses L-seryl-[protein] + UTP = O-(5'-uridylyl)-L-seryl-[protein] + diphosphate. It carries out the reaction L-tyrosyl-[protein] + UTP = O-(5'-uridylyl)-L-tyrosyl-[protein] + diphosphate. Nucleotidyltransferase involved in the post-translational modification of proteins. It can catalyze the addition of adenosine monophosphate (AMP) or uridine monophosphate (UMP) to a protein, resulting in modifications known as AMPylation and UMPylation. The chain is Protein nucleotidyltransferase YdiU from Salmonella paratyphi C (strain RKS4594).